The chain runs to 881 residues: Valine--tRNA ligase (881 aa).

The 'HIGH' region signature appears at 49–59 (PNVTGKLHLGH). The 'KMSKS' region motif lies at 526-530 (KMSKS). Residue lysine 529 coordinates ATP. Residues 810–881 (LADLINLDEE…VRQRLADLEK (72 aa)) are a coiled coil.

Belongs to the class-I aminoacyl-tRNA synthetase family. ValS type 1 subfamily. As to quaternary structure, monomer.

The protein localises to the cytoplasm. The catalysed reaction is tRNA(Val) + L-valine + ATP = L-valyl-tRNA(Val) + AMP + diphosphate. In terms of biological role, catalyzes the attachment of valine to tRNA(Val). As ValRS can inadvertently accommodate and process structurally similar amino acids such as threonine, to avoid such errors, it has a 'posttransfer' editing activity that hydrolyzes mischarged Thr-tRNA(Val) in a tRNA-dependent manner. In Bacillus cereus (strain ATCC 10987 / NRS 248), this protein is Valine--tRNA ligase.